A 546-amino-acid chain; its full sequence is 6'''-hydroxyparomomycin C oxidase (546 aa).

Positions 1–30 are disordered; the sequence is MERLRGPSPLENTTARHPAPLGPAHRDGLE. His475 serves as the catalytic Proton acceptor.

The protein belongs to the GMC oxidoreductase family. The cofactor is FAD.

The protein operates within antibiotic biosynthesis; lividomycin biosynthesis. Functionally, glucosaminyl-6'-oxidase involved in the biosynthetic pathway of lividomycin by mediating FAD-dependent dehydrogenation of 6'''-hydroxyparomomycin to paromomycin. The polypeptide is 6'''-hydroxyparomomycin C oxidase (livQ) (Streptomyces lividus).